A 449-amino-acid chain; its full sequence is Delta(8)-fatty-acid desaturase 1 (449 aa).

One can recognise a Cytochrome b5 heme-binding domain in the interval 7–91 (KKYITNEDLK…IRDFQVSEVS (85 aa)). 2 residues coordinate heme: His42 and His65. 2 helical membrane-spanning segments follow: residues 113–133 (VTLYTLAFVAAMFLGVLYGVL) and 138–158 (VFAHQIAAALLGLLWIQSAYI). Residues 160–164 (HDSGH) carry the Histidine box-1 motif. A helical transmembrane segment spans residues 173–195 (YNRFAQLLSGNCLTGISIAWWKW). The Histidine box-2 signature appears at 197–201 (HNAHH). 3 helical membrane-spanning segments follow: residues 255-275 (YYPVMCFGRINLFIQTFLLLF), 284-304 (ALNFAGILVFWTWFPLLVSCL), and 311-331 (FFFVFTSFTVTALQHIQFTLN). Residues 374-378 (QLEHH) carry the Histidine box-3 motif.

The protein belongs to the fatty acid desaturase type 1 family. Requires Fe cation as cofactor. As to expression, highly expressed in flowers. Expressed in roots, leaves, stems and siliques.

Its subcellular location is the endoplasmic reticulum membrane. The enzyme catalyses an N-acyl-(4R)-4-hydroxysphinganine + 2 Fe(II)-[cytochrome b5] + O2 + 2 H(+) = a (4R,8E)-4-hydroxysphingenine ceramide + 2 Fe(III)-[cytochrome b5] + 2 H2O. It carries out the reaction an N-acyl-(4R)-4-hydroxysphinganine + 2 Fe(II)-[cytochrome b5] + O2 + 2 H(+) = a (4R,8Z)-4-hydroxysphing-8-enine ceramide + 2 Fe(III)-[cytochrome b5] + 2 H2O. Plays a major role as delta(8)-fatty-acid desaturase which introduces a double bond at the 8-position in the long-chain base (LCB) of ceramides with or without a hydroxy group at the 4-position. The enzyme produces both the 8E and 8Z isomers (in a 4:1 ratio). This structural modification contributes to the quantitative partitioning of ceramides between the two major sphingolipid classes, glucosylceramides and glycosylinositolphosphoryl ceramides. Sphingolipids are important membrane components involved in environmental stress responses, such as resistance to chilling, and act as cell signaling molecules. This chain is Delta(8)-fatty-acid desaturase 1 (SLD1), found in Arabidopsis thaliana (Mouse-ear cress).